The following is a 2036-amino-acid chain: Proline-rich protein 12 (2036 aa).

Disordered regions lie at residues 210–283, 331–587, and 649–697; these read GGGV…RALP, CSPL…GAPG, and APSP…DPQR. The span at 223-240 shows a compositional bias: pro residues; it reads QTPPYRPGPPDPPPPPRH. Residues 249 to 258 are compositionally biased toward low complexity; that stretch reads ASSSAAAAAA. S332 and S340 each carry phosphoserine. Positions 340 to 365 are enriched in low complexity; that stretch reads SPGAGEPSKAGPSGATAGASGRATGP. Gly residues-rich tracts occupy residues 367 to 380 and 391 to 400; these read AAGG…GGGY and TGKGGYGAAA. 2 stretches are compositionally biased toward low complexity: residues 411–432 and 441–458; these read STAT…TGKA and QAYS…QAYG. Pro residues predominate over residues 479–490; that stretch reads PPQPPSGPPPPG. Composition is skewed to polar residues over residues 493 to 504 and 523 to 537; these read TCQSYSPDQLQG and GLPT…STGH. A compositionally biased stretch (gly residues) spans 543 to 558; sequence GHGGGWGPSSLGGGGE. S651 is subject to Phosphoserine. The segment covering 673–683 has biased composition (gly residues); it reads GLGGSGGAGGP. A Phosphothreonine modification is found at T738. 4 disordered regions span residues 758-850, 859-878, 886-925, and 952-1068; these read AFLQ…PLQL, LEPA…DPPG, ALEP…KAPR, and EMFG…CSTK. Residues 802–817 show a composition bias toward low complexity; it reads LPSVLSHAPSPSPSAS. Positions 833–847 are enriched in pro residues; sequence PQPPPPPPPPPPPMP. S865 is subject to Phosphoserine. Residues 1037-1052 show a composition bias toward pro residues; that stretch reads AAPPPPPPPPPPPAPA. Phosphoserine is present on residues S1077 and S1135. 4 disordered regions span residues 1120 to 1260, 1294 to 1347, 1376 to 1573, and 1668 to 1840; these read RLPD…SLTR, RHPP…GGAL, TLPS…GEGI, and HRPP…PGRL. The span at 1182 to 1194 shows a compositional bias: low complexity; sequence PTTAGPASASTPT. Positions 1199–1208 are enriched in basic residues; it reads KPRGRGRGRG. Over residues 1209-1223 the composition is skewed to basic and acidic residues; that stretch reads RKAEEAGGTRLEPLK. An N6-acetyllysine modification is found at K1223. Polar residues predominate over residues 1239–1257; the sequence is GTSSGDAISGTDHNSLDSS. T1304 carries the post-translational modification Phosphothreonine. Pro residues-rich tracts occupy residues 1306–1317 and 1324–1338; these read PLSPPKSVPPSV and PQPP…PPPS. S1308 carries the post-translational modification Phosphoserine. A phosphoserine mark is found at S1381, S1382, and S1387. Pro residues-rich tracts occupy residues 1420–1438 and 1458–1535; these read DGPP…PLPG and PPTP…APSP. The span at 1541 to 1553 shows a compositional bias: basic and acidic residues; the sequence is PDTRPLHLAKKQE. T1561 carries the post-translational modification Phosphothreonine. Residue S1568 is modified to Phosphoserine. Positions 1691-1703 are enriched in pro residues; that stretch reads APPPKAPAPPPKP. 2 stretches are compositionally biased toward basic and acidic residues: residues 1704–1715 and 1737–1769; these read ETPEKTTSEKPP and PVEK…RPER. T1705 carries the post-translational modification Phosphothreonine. The segment covering 1817–1829 has biased composition (low complexity); that stretch reads GSSSDSESSPGAP. S1925 carries the phosphoserine modification.

It localises to the nucleus. Its subcellular location is the postsynaptic density. The protein localises to the synapse. It is found in the synaptosome. The chain is Proline-rich protein 12 from Homo sapiens (Human).